The following is a 502-amino-acid chain: MKIGFDHEKYIEEQSKYILERVNNYDKLYLEFGGKLLYDLHAKRVLPGFDENAKIKLLHKLKEKVEIIICVYAGDIERNKIRGDFGITYDVDVLRLIDDLRSYDLQVNSVVITRYSGQPSTTVFINKLERRGIKVYKHEATKGYPADVDTIVSDEGYGKNPYIETTKPIVVVTAPGPGSGKLATCLSQLYHEYKQGKVAGYSKFETFPVWNVPLKHPLNIAYEAATVDLKDVNMIDSFHFDAYNEVAVNYNRDIESFPLLKRIIEKITGEESGYKSPTDMGVNRVGYGIIDDEVVKKASEQEIIRRYFKTGCEYKKGYLDKETLHRSKIIMHELNLKEDDRKVVMPAREYSAKLKKRYNKNEVYPVVALELEDGKVLTGRNSDVMDGTAAVILNAVKYLANISDEIHLISPVILEPIINLKLKTLGSKSTALTCEEILIALSICAVTNPTAQVAMEKLSMLRGCQAHSTTILSGNEEQTFRKLGIDITCDPEYPSESLYYNN.

This sequence belongs to the UPF0371 family.

The chain is UPF0371 protein CTC_00401 from Clostridium tetani (strain Massachusetts / E88).